The primary structure comprises 97 residues: Citrate lyase acyl carrier protein (97 aa).

S14 is modified (O-(phosphoribosyl dephospho-coenzyme A)serine).

It belongs to the CitD family. In terms of assembly, oligomer with a subunit composition of (alpha,beta,gamma)6.

Its subcellular location is the cytoplasm. Covalent carrier of the coenzyme of citrate lyase. This chain is Citrate lyase acyl carrier protein, found in Leuconostoc citreum (strain KM20).